A 105-amino-acid chain; its full sequence is Thioredoxin (105 aa).

Positions 2 to 105 (VKLIESKEAF…KLEATITEFA (104 aa)) constitute a Thioredoxin domain. At K3 the chain carries N6-acetyllysine. K8 bears the N6-succinyllysine mark. Catalysis depends on nucleophile residues C32 and C35. C32 and C35 are oxidised to a cystine. K39 bears the N6-acetyllysine mark. C62 and C69 each carry S-nitrosocysteine. C73 carries the post-translational modification S-nitrosocysteine; alternate. K94 is modified (N6-acetyllysine; alternate). N6-succinyllysine; alternate is present on K94.

This sequence belongs to the thioredoxin family. Homodimer; disulfide-linked. Interacts with TXNIP through the redox-active site. Interacts with MAP3K5 and CASP3. Interacts with APEX1; the interaction stimulates the FOS/JUN AP-1 DNA-binding activity in a redox-dependent manner. In the fully reduced protein, both Cys-69 and Cys-73 are nitrosylated in response to nitric oxide (NO). When two disulfide bonds are present in the protein, only Cys-73 is nitrosylated. Cys-73 can serve as donor for nitrosylation of target proteins.

Its subcellular location is the nucleus. The protein localises to the cytoplasm. The protein resides in the secreted. Participates in various redox reactions through the reversible oxidation of its active center dithiol to a disulfide and catalyzes dithiol-disulfide exchange reactions. Plays a role in the reversible S-nitrosylation of cysteine residues in target proteins, and thereby contributes to the response to intracellular nitric oxide. Nitrosylates the active site Cys of CASP3 in response to nitric oxide (NO), and thereby inhibits caspase-3 activity. Induces the FOS/JUN AP-1 DNA binding activity in ionizing radiation (IR) cells through its oxidation/reduction status and stimulates AP-1 transcriptional activity. The protein is Thioredoxin (Txn) of Rattus norvegicus (Rat).